The primary structure comprises 293 residues: Ribosomal RNA small subunit methyltransferase A (293 aa).

6 residues coordinate S-adenosyl-L-methionine: Asn29, Leu31, Gly56, Glu77, Asp102, and Asn127.

The protein belongs to the class I-like SAM-binding methyltransferase superfamily. rRNA adenine N(6)-methyltransferase family. RsmA subfamily.

The protein resides in the cytoplasm. It carries out the reaction adenosine(1518)/adenosine(1519) in 16S rRNA + 4 S-adenosyl-L-methionine = N(6)-dimethyladenosine(1518)/N(6)-dimethyladenosine(1519) in 16S rRNA + 4 S-adenosyl-L-homocysteine + 4 H(+). Functionally, specifically dimethylates two adjacent adenosines (A1518 and A1519) in the loop of a conserved hairpin near the 3'-end of 16S rRNA in the 30S particle. May play a critical role in biogenesis of 30S subunits. This is Ribosomal RNA small subunit methyltransferase A from Geobacillus kaustophilus (strain HTA426).